A 312-amino-acid chain; its full sequence is Carbonic anhydrase 4 (312 aa).

The signal sequence occupies residues 1-18 (MRMLLALLALSAARPSAS). One can recognise an Alpha-carbonic anhydrase domain in the interval 21-285 (SHWCYEVQAE…LGQRTVIKSG (265 aa)). 2 cysteine pairs are disulfide-bonded: cysteine 24-cysteine 36 and cysteine 46-cysteine 229. The active-site Proton donor/acceptor is the histidine 88. Residues histidine 115, histidine 117, and histidine 140 each contribute to the Zn(2+) site. 225 to 226 (TT) is a binding site for substrate. A lipid anchor (GPI-anchor amidated serine) is attached at serine 284. Residues 285–312 (GAPGRPLPWALPALLGPMLACLLAGFLR) constitute a propeptide, removed in mature form.

The protein belongs to the alpha-carbonic anhydrase family. As to quaternary structure, interacts with SLC4A4. It depends on Zn(2+) as a cofactor. In terms of tissue distribution, expressed in the endothelium of the choriocapillaris in eyes (at protein level). Not expressed in the retinal epithelium at detectable levels.

It is found in the cell membrane. The catalysed reaction is hydrogencarbonate + H(+) = CO2 + H2O. With respect to regulation, activated by histamine, L-adrenaline, D-phenylalanine, L- and D-histidine. Inhibited by coumarins, saccharin, sulfonamide derivatives such as acetazolamide and Foscarnet (phosphonoformate trisodium salt). Functionally, catalyzes the reversible hydration of carbon dioxide into bicarbonate and protons and thus is essential to maintaining intracellular and extracellular pH. May stimulate the sodium/bicarbonate transporter activity of SLC4A4 that acts in pH homeostasis. It is essential for acid overload removal from the retina and retina epithelium, and acid release in the choriocapillaris in the choroid. In Homo sapiens (Human), this protein is Carbonic anhydrase 4.